We begin with the raw amino-acid sequence, 74 residues long: uncharacterized protein (74 aa).

2 helical membrane-spanning segments follow: residues 3–23 and 35–55; these read YSAL…CFSF and ILFF…MLLT.

It localises to the cell membrane. This is an uncharacterized protein from Mycoplasma genitalium (strain ATCC 33530 / DSM 19775 / NCTC 10195 / G37) (Mycoplasmoides genitalium).